The primary structure comprises 245 residues: Carboxy-S-adenosyl-L-methionine synthase (245 aa).

Residues Tyr42, 67–69 (GCS), 92–93 (DN), 120–121 (DI), Asn135, and Arg202 contribute to the S-adenosyl-L-methionine site.

Belongs to the class I-like SAM-binding methyltransferase superfamily. Cx-SAM synthase family. In terms of assembly, homodimer.

The catalysed reaction is prephenate + S-adenosyl-L-methionine = carboxy-S-adenosyl-L-methionine + 3-phenylpyruvate + H2O. Its function is as follows. Catalyzes the conversion of S-adenosyl-L-methionine (SAM) to carboxy-S-adenosyl-L-methionine (Cx-SAM). The sequence is that of Carboxy-S-adenosyl-L-methionine synthase from Vibrio vulnificus (strain YJ016).